We begin with the raw amino-acid sequence, 1380 residues long: DNA-directed RNA polymerase subunit beta (1380 aa).

The protein belongs to the RNA polymerase beta chain family. The RNAP catalytic core consists of 2 alpha, 1 beta, 1 beta' and 1 omega subunit. When a sigma factor is associated with the core the holoenzyme is formed, which can initiate transcription.

It carries out the reaction RNA(n) + a ribonucleoside 5'-triphosphate = RNA(n+1) + diphosphate. Functionally, DNA-dependent RNA polymerase catalyzes the transcription of DNA into RNA using the four ribonucleoside triphosphates as substrates. This chain is DNA-directed RNA polymerase subunit beta, found in Rhizobium meliloti (strain 1021) (Ensifer meliloti).